The sequence spans 97 residues: Phosphoribosyl-ATP pyrophosphatase (97 aa).

Belongs to the PRA-PH family.

The protein localises to the cytoplasm. It carries out the reaction 1-(5-phospho-beta-D-ribosyl)-ATP + H2O = 1-(5-phospho-beta-D-ribosyl)-5'-AMP + diphosphate + H(+). It functions in the pathway amino-acid biosynthesis; L-histidine biosynthesis; L-histidine from 5-phospho-alpha-D-ribose 1-diphosphate: step 2/9. The polypeptide is Phosphoribosyl-ATP pyrophosphatase (Methanoculleus marisnigri (strain ATCC 35101 / DSM 1498 / JR1)).